Here is a 330-residue protein sequence, read N- to C-terminus: Low affinity immunoglobulin gamma Fc region receptor II (330 aa).

The signal sequence occupies residues 1-29; the sequence is MESNWTVHVFSRTLCHMLLWTAVLNLAAG. At 30–210 the chain is on the extracellular side; that stretch reads THDLPKAVVK…QGPKSSRSLP (181 aa). Ig-like C2-type domains follow at residues 50–106 and 131–189; these read EDTV…QTRL and GETI…LGRT. 2 cysteine pairs are disulfide-bonded: C57–C99 and C138–C182. Residues N65, N92, N166, and N173 are each glycosylated (N-linked (GlcNAc...) asparagine). A helical transmembrane segment spans residues 211–231; that stretch reads VLTIVAAVTGIAVAAIVIILV. At 232–330 the chain is on the cytoplasmic side; the sequence is SLVYLKKKQV…ETEHDYQNHI (99 aa). A disordered region spans residues 261–330; it reads VGEYRQPSGG…ETEHDYQNHI (70 aa). Y290 is subject to Phosphotyrosine. An ITIM motif motif is present at residues 307-312; it reads ITYSLL. Y309 is modified (phosphotyrosine; by SRC-type Tyr-kinases). Y326 carries the phosphotyrosine modification.

Interacts with FGR. Interacts with LYN. Glycosylated. In terms of processing, when coaggregated to BCR, isoform IIB1 and isoform IIB1' become tyrosine phosphorylated and bind to the SH2 domains of the protein tyrosine phosphatase PTPC1. Phosphorylated by SRC-type Tyr-kinases such as LYN, BLK, FYN and SYK. Widely expressed by cells of hemopoietic origin. The isoforms are differentially expressed. Isoform IIB1 is preferentially expressed by cells of the lymphoid lineage, isoform IIB2 by cells of the myeloid lineage, and isoform IIB3 is released by macrophages and is present in the serum. Isoform IIB1' is expressed in myeloid and lymphoid cell lines, in normal spleen cells, and in resting or LPS-activated B-cells but is not detected in mesenteric lymph node cells.

It localises to the cell membrane. The protein localises to the cytoplasm. It is found in the cytoskeleton. The protein resides in the secreted. Its function is as follows. Receptor for the Fc region of complexed immunoglobulins gamma. Low affinity receptor. Involved in a variety of effector and regulatory functions such as phagocytosis of antigen-antibody complexes from the circulation and modulation of antibody production by B-cells. Isoform IIB1 and isoform IIB1' form caps but fail to mediate endocytosis or phagocytosis. Isoform IIB2 can mediate the endocytosis of soluble immune complexes via clathrin-coated pits. Isoform IIB1 and isoform IIB2 can down-regulate B-cell, T-cell, and mast cell activation when coaggregated to B-cell receptors for AG (BCR), T-cell receptors for AG (TCR), and Fc receptors, respectively. This is Low affinity immunoglobulin gamma Fc region receptor II (Fcgr2) from Mus musculus (Mouse).